A 123-amino-acid polypeptide reads, in one-letter code: Large ribosomal subunit protein uL14 (123 aa).

It belongs to the universal ribosomal protein uL14 family. As to quaternary structure, part of the 50S ribosomal subunit. Forms a cluster with proteins L3 and L19. In the 70S ribosome, L14 and L19 interact and together make contacts with the 16S rRNA in bridges B5 and B8.

Functionally, binds to 23S rRNA. Forms part of two intersubunit bridges in the 70S ribosome. This is Large ribosomal subunit protein uL14 from Vibrio vulnificus (strain CMCP6).